The chain runs to 228 residues: Phosphatidate cytidylyltransferase (228 aa).

Helical transmembrane passes span 31–51 (FVIA…LVGL), 65–85 (INYL…LIFL), 93–113 (LVIM…MIGG), 131–151 (WTGL…VSLI), 165–185 (IYLF…DLFI), and 206–226 (GVLD…CINI).

Belongs to the CDS family.

The protein localises to the cell membrane. The enzyme catalyses a 1,2-diacyl-sn-glycero-3-phosphate + CTP + H(+) = a CDP-1,2-diacyl-sn-glycerol + diphosphate. It participates in phospholipid metabolism; CDP-diacylglycerol biosynthesis; CDP-diacylglycerol from sn-glycerol 3-phosphate: step 3/3. The protein is Phosphatidate cytidylyltransferase (cdsA) of Rickettsia prowazekii (strain Madrid E).